The chain runs to 241 residues: Pyridoxine 5'-phosphate synthase (241 aa).

Asn10 lines the 3-amino-2-oxopropyl phosphate pocket. 12-13 provides a ligand contact to 1-deoxy-D-xylulose 5-phosphate; sequence DH. A 3-amino-2-oxopropyl phosphate-binding site is contributed by Arg21. Residue His48 is the Proton acceptor of the active site. Residues Arg50 and His55 each contribute to the 1-deoxy-D-xylulose 5-phosphate site. Catalysis depends on Glu75, which acts as the Proton acceptor. Thr105 serves as a coordination point for 1-deoxy-D-xylulose 5-phosphate. The Proton donor role is filled by His195. 3-amino-2-oxopropyl phosphate contacts are provided by residues Gly196 and 217–218; that span reads GH.

Belongs to the PNP synthase family. In terms of assembly, homooctamer; tetramer of dimers.

The protein localises to the cytoplasm. It catalyses the reaction 3-amino-2-oxopropyl phosphate + 1-deoxy-D-xylulose 5-phosphate = pyridoxine 5'-phosphate + phosphate + 2 H2O + H(+). It participates in cofactor biosynthesis; pyridoxine 5'-phosphate biosynthesis; pyridoxine 5'-phosphate from D-erythrose 4-phosphate: step 5/5. Functionally, catalyzes the complicated ring closure reaction between the two acyclic compounds 1-deoxy-D-xylulose-5-phosphate (DXP) and 3-amino-2-oxopropyl phosphate (1-amino-acetone-3-phosphate or AAP) to form pyridoxine 5'-phosphate (PNP) and inorganic phosphate. The protein is Pyridoxine 5'-phosphate synthase of Bdellovibrio bacteriovorus (strain ATCC 15356 / DSM 50701 / NCIMB 9529 / HD100).